Consider the following 385-residue polypeptide: Probable caffeine synthase 3 (385 aa).

Residues Tyr18, Cys62, Asn67, Asp101, Leu102, Ser140, and Phe141 each coordinate S-adenosyl-L-homocysteine. Residues Tyr158, Gln161, and Phe162 each contribute to the caffeine site. Asn179 contacts Mg(2+). Thr238 is a binding site for caffeine. Residues Asp261, Phe263, and Asn264 each contribute to the Mg(2+) site. Tyr369 lines the caffeine pocket.

The protein belongs to the methyltransferase superfamily. Type-7 methyltransferase family. Requires Mg(2+) as cofactor. Expressed in roots, stems, young and old leaves.

It participates in alkaloid biosynthesis. Its function is as follows. May be involved in the biosynthesis of caffeine. The protein is Probable caffeine synthase 3 of Coffea arabica (Arabian coffee).